The primary structure comprises 238 residues: ATP-dependent Clp protease proteolytic subunit 4 (238 aa).

Ser113 functions as the Nucleophile in the catalytic mechanism. His138 is a catalytic residue.

This sequence belongs to the peptidase S14 family. Fourteen ClpP subunits assemble into 2 heptameric rings which stack back to back to give a disk-like structure with a central cavity, resembling the structure of eukaryotic proteasomes.

It localises to the cytoplasm. The enzyme catalyses Hydrolysis of proteins to small peptides in the presence of ATP and magnesium. alpha-casein is the usual test substrate. In the absence of ATP, only oligopeptides shorter than five residues are hydrolyzed (such as succinyl-Leu-Tyr-|-NHMec, and Leu-Tyr-Leu-|-Tyr-Trp, in which cleavage of the -Tyr-|-Leu- and -Tyr-|-Trp bonds also occurs).. In terms of biological role, cleaves peptides in various proteins in a process that requires ATP hydrolysis. Has a chymotrypsin-like activity. Plays a major role in the degradation of misfolded proteins. This Frankia casuarinae (strain DSM 45818 / CECT 9043 / HFP020203 / CcI3) protein is ATP-dependent Clp protease proteolytic subunit 4.